The following is a 262-amino-acid chain: 14-3-3-like protein GF14-E (262 aa).

This sequence belongs to the 14-3-3 family. As to expression, ubiquitous.

It localises to the cytoplasm. Its subcellular location is the nucleus. Functionally, is associated with a DNA binding complex that binds to the G box, a well-characterized cis-acting DNA regulatory element found in plant genes. This Oryza sativa subsp. japonica (Rice) protein is 14-3-3-like protein GF14-E (GF14E).